Consider the following 652-residue polypeptide: tRNA 5-methylaminomethyl-2-thiouridine biosynthesis bifunctional protein MnmC (652 aa).

Residues Met1–Ser227 form a tRNA (mnm(5)s(2)U34)-methyltransferase region. Residues Ile259–Lys652 form an FAD-dependent cmnm(5)s(2)U34 oxidoreductase region.

This sequence in the N-terminal section; belongs to the methyltransferase superfamily. tRNA (mnm(5)s(2)U34)-methyltransferase family. It in the C-terminal section; belongs to the DAO family. FAD serves as cofactor.

The protein localises to the cytoplasm. It catalyses the reaction 5-aminomethyl-2-thiouridine(34) in tRNA + S-adenosyl-L-methionine = 5-methylaminomethyl-2-thiouridine(34) in tRNA + S-adenosyl-L-homocysteine + H(+). Its function is as follows. Catalyzes the last two steps in the biosynthesis of 5-methylaminomethyl-2-thiouridine (mnm(5)s(2)U) at the wobble position (U34) in tRNA. Catalyzes the FAD-dependent demodification of cmnm(5)s(2)U34 to nm(5)s(2)U34, followed by the transfer of a methyl group from S-adenosyl-L-methionine to nm(5)s(2)U34, to form mnm(5)s(2)U34. This is tRNA 5-methylaminomethyl-2-thiouridine biosynthesis bifunctional protein MnmC from Leptospira borgpetersenii serovar Hardjo-bovis (strain JB197).